Consider the following 126-residue polypeptide: Glycine cleavage system H protein (126 aa).

One can recognise a Lipoyl-binding domain in the interval 21-103; it reads TVTIGISEHA…YEGGWIVKVK (83 aa). Position 62 is an N6-lipoyllysine (lysine 62).

This sequence belongs to the GcvH family. As to quaternary structure, the glycine cleavage system is composed of four proteins: P, T, L and H. Requires (R)-lipoate as cofactor.

Its function is as follows. The glycine cleavage system catalyzes the degradation of glycine. The H protein shuttles the methylamine group of glycine from the P protein to the T protein. The polypeptide is Glycine cleavage system H protein (Vibrio vulnificus (strain CMCP6)).